A 726-amino-acid polypeptide reads, in one-letter code: Serine/threonine-protein kinase PKH3 (726 aa).

In terms of domain architecture, Protein kinase spans 10-271 (FLFREELGHG…LEQIKKHKWF (262 aa)). Residues 16–24 (LGHGSYSTV) and K39 each bind ATP. D136 (proton acceptor) is an active-site residue. Residues 629–679 (QDIPLPSPAKSSSNSGVSEPISKIPPRQLVSASEQSHKAKSEAHTKKANSY) form a disordered region. A compositionally biased stretch (basic and acidic residues) spans 663–673 (QSHKAKSEAHT).

This sequence belongs to the protein kinase superfamily. Ser/Thr protein kinase family.

It catalyses the reaction L-seryl-[protein] + ATP = O-phospho-L-seryl-[protein] + ADP + H(+). It carries out the reaction L-threonyl-[protein] + ATP = O-phospho-L-threonyl-[protein] + ADP + H(+). Serine/threonine-protein kinase. The protein is Serine/threonine-protein kinase PKH3 (PKH3) of Eremothecium gossypii (strain ATCC 10895 / CBS 109.51 / FGSC 9923 / NRRL Y-1056) (Yeast).